The primary structure comprises 125 residues: Small ribosomal subunit protein uS13 (125 aa).

The interval 92–125 is disordered; the sequence is RRSLPVRGQRTQTNARTRKGKRKTVAGKKKATKK. Residues 107-125 are compositionally biased toward basic residues; the sequence is RTRKGKRKTVAGKKKATKK.

It belongs to the universal ribosomal protein uS13 family. In terms of assembly, part of the 30S ribosomal subunit. Forms a loose heterodimer with protein S19. Forms two bridges to the 50S subunit in the 70S ribosome.

Its function is as follows. Located at the top of the head of the 30S subunit, it contacts several helices of the 16S rRNA. In the 70S ribosome it contacts the 23S rRNA (bridge B1a) and protein L5 of the 50S subunit (bridge B1b), connecting the 2 subunits; these bridges are implicated in subunit movement. Contacts the tRNAs in the A and P-sites. This Chlorobium limicola (strain DSM 245 / NBRC 103803 / 6330) protein is Small ribosomal subunit protein uS13.